A 587-amino-acid chain; its full sequence is Vesicular glutamate transporter 2.2 (587 aa).

Residues 1-71 (MDTVKERVLA…CTCFGLPRRY (71 aa)) are Cytoplasmic-facing. Residues 72–92 (IIAIMSGLGFCISFGIRCNLG) traverse the membrane as a helical segment. The Vesicular portion of the chain corresponds to 93–125 (VAIVDMVNNSTIHKGGKIIIKGKAKFNWDPETV). Residues Asn-100 and Asn-101 are each glycosylated (N-linked (GlcNAc...) asparagine). The chain crosses the membrane as a helical span at residues 126 to 146 (GMIHGSFFWGYTVTQIPGGYI). Over 147 to 149 (SSR) the chain is Cytoplasmic. Residues 150-170 (LAANRVFGAAILLTSTLNMFI) traverse the membrane as a helical segment. Topologically, residues 171–180 (PSAARVHYGC) are vesicular. A helical transmembrane segment spans residues 181 to 203 (VMFVRILQGLVEGVTYPACHGIW). At 204 to 217 (SKWAPPLERSRLAT) the chain is on the cytoplasmic side. The helical transmembrane segment at 218–238 (TSFCGSYAGAVVAMPLAGILV) threads the bilayer. Topologically, residues 239 to 245 (QYSGWSS) are vesicular. The chain crosses the membrane as a helical span at residues 246-266 (VFYIYGSFGIVWYMFWILVSY). At 267 to 311 (ESPADHPTITDEERTYIEESIGESAKLLGAMEKYKTPWRKFFTSM) the chain is on the cytoplasmic side. The chain crosses the membrane as a helical span at residues 312-332 (PVYAIIVANFCRSWTFYLLLI). Residues 333-350 (SQPAYFEEVFGFEISKVG) are Vesicular-facing. The helical transmembrane segment at 351–371 (MVSALPHLVMTIIVPIGGQLA) threads the bilayer. The Cytoplasmic segment spans residues 372–387 (DYLRSKNILTTTTVRK). Residues 388–408 (IMNCGGFGMEATLLLVVGFSH) traverse the membrane as a helical segment. Topologically, residues 409-410 (SK) are vesicular. Residues 411-431 (GVAISFLVLAVGFSGFAISGF) form a helical membrane-spanning segment. Residues 432-444 (NVNHLDIAPRYAS) lie on the Cytoplasmic side of the membrane. A helical transmembrane segment spans residues 445 to 465 (ILMGISNGVGTLSGMVCPLIV). The Vesicular segment spans residues 466–479 (GAMTKNKTREEWQN). Asn-471 carries N-linked (GlcNAc...) asparagine glycosylation. A helical membrane pass occupies residues 480-500 (VFLIASLVHYGGVIFYGIFAS). Over 501-587 (GEKQPWADPE…ERTYTGDGYS (87 aa)) the chain is Cytoplasmic.

Belongs to the major facilitator superfamily. Sodium/anion cotransporter family. VGLUT subfamily. Expressed in spinal cord.

The protein resides in the cytoplasmic vesicle. The protein localises to the secretory vesicle. It is found in the synaptic vesicle membrane. It localises to the membrane. Its subcellular location is the synapse. The protein resides in the synaptosome. The protein localises to the cell membrane. It carries out the reaction L-glutamate(out) = L-glutamate(in). It catalyses the reaction 3 Na(+)(out) + phosphate(out) = 3 Na(+)(in) + phosphate(in). The enzyme catalyses phosphate(in) = phosphate(out). The catalysed reaction is K(+)(in) + H(+)(out) = K(+)(out) + H(+)(in). It carries out the reaction chloride(in) = chloride(out). Chloride channel activity is allosterically activated by lumenal H(+) and Cl(-) leading to synaptic vesicles acidification. The L-glutamate transport activity is allosterically activated by lumenal H(+) and Cl(-). The allosteric requirement for H(+) efficiently prevents non-vesicular efflux across the plasma membrane. The L-glutamate uniporter activity exhibits a biphasic dependence on chloride concentration. Its function is as follows. Multifunctional transporter that transports L-glutamate as well as multiple ions such as chloride, proton, potassium, sodium and phosphate. At the synaptic vesicle membrane, mainly functions as a uniporter which transports preferentially L-glutamate but also, phosphate from the cytoplasm into synaptic vesicles at presynaptic nerve terminals of excitatory neural cells. The L-glutamate or phosphate uniporter activity is electrogenic and is driven by the proton electrochemical gradient, mainly by the electrical gradient established by the vacuolar H(+)-ATPase across the synaptic vesicle membrane. In addition, functions as a chloride channel that allows a chloride permeation through the synaptic vesicle membrane therefore affects the proton electrochemical gradient and promotes synaptic vesicles acidification. Moreover, functions as a vesicular K(+)/H(+) antiport allowing to maintain the electrical gradient and to decrease chemical gradient and therefore sustain vesicular L-glutamate uptake. The vesicular H(+)/H(+) antiport activity is electroneutral. At the plasma membrane, following exocytosis, functions as a symporter of Na(+) and phosphate from the extracellular space to the cytoplasm allowing synaptic phosphate homeostasis regulation. The symporter activity is driven by an inside negative membrane potential and is electrogenic. Also involved in the regulation of retinal hyaloid vessel regression during postnatal development. May also play a role in the endocrine L-glutamatergic system of other tissues such as pineal gland and pancreas. The chain is Vesicular glutamate transporter 2.2 (slc17a6a) from Danio rerio (Zebrafish).